Here is a 386-residue protein sequence, read N- to C-terminus: MGPTISIGEALDRYDIDNARYAGSLQTDISAWLRLRNDDSQIIILHPDHRPPVKYEQDIFETESLVPAMNAARGVKDSYEIELIRKANIVSGLAHTAVLEKIGQMTNESDIAGLFLETCMTHGAPEQAYGIIAASGENGATLHYMKNNEDFGSRLSVCLDAGAEYECYASDVTRTFPISSTGEWPTTEARDIYLAVERMQEECIRMIKPGVRFRDVHIHASVVAVEELLKLGVFKEGNSVDEIMASGAVSVFFPHGLGHHVGLEVHDVSEQSVMAATDDMSPRMRARGFLMQPASMMSAALLEANMIVTVEPGIYFNRLALKNARTLPIARFIDFDVVERYYAIGGVRIEDDILVTTDGYENLTTAPKGDAALAIIRKSSVKNSRS.

Residues Asp160, Asp171, Glu311, and Glu350 each coordinate Mn(2+).

This sequence belongs to the peptidase M24B family. Mn(2+) is required as a cofactor.

The catalysed reaction is Release of any N-terminal amino acid, including proline, that is linked to proline, even from a dipeptide or tripeptide.. Functionally, catalyzes the removal of a penultimate prolyl residue from the N-termini of peptides. In Talaromyces marneffei (strain ATCC 18224 / CBS 334.59 / QM 7333) (Penicillium marneffei), this protein is Probable Xaa-Pro aminopeptidase PMAA_074180.